Reading from the N-terminus, the 342-residue chain is L-threonine 3-dehydrogenase (342 aa).

C38 is a Zn(2+) binding site. Residues T40 and H43 each act as charge relay system in the active site. Zn(2+) is bound by residues H63, E64, C93, C96, C99, and C107. NAD(+) contacts are provided by residues I175, D195, R200, 262 to 264 (LGL), and 286 to 287 (IY).

The protein belongs to the zinc-containing alcohol dehydrogenase family. Homotetramer. Zn(2+) serves as cofactor.

It localises to the cytoplasm. It catalyses the reaction L-threonine + NAD(+) = (2S)-2-amino-3-oxobutanoate + NADH + H(+). The protein operates within amino-acid degradation; L-threonine degradation via oxydo-reductase pathway; glycine from L-threonine: step 1/2. Its function is as follows. Catalyzes the NAD(+)-dependent oxidation of L-threonine to 2-amino-3-ketobutyrate. The polypeptide is L-threonine 3-dehydrogenase (Streptomyces coelicolor (strain ATCC BAA-471 / A3(2) / M145)).